The chain runs to 342 residues: P21 prophage-derived major head protein (342 aa).

The protein belongs to the lambda phage major capsid protein family.

In Escherichia coli O6:H1 (strain CFT073 / ATCC 700928 / UPEC), this protein is P21 prophage-derived major head protein.